Here is a 518-residue protein sequence, read N- to C-terminus: Putative succinate-semialdehyde dehydrogenase [NADP(+)] 2 (518 aa).

NADP(+) contacts are provided by residues 157 to 158, 181 to 184, and 232 to 233; these read WN, KPDS, and GS. Residue E254 is the Proton acceptor of the active site. NADP(+) is bound at residue L255. The active-site Nucleophile is C288. Residue E386 participates in NADP(+) binding.

The protein belongs to the aldehyde dehydrogenase family.

It catalyses the reaction succinate semialdehyde + NADP(+) + H2O = succinate + NADPH + 2 H(+). Catalyzes the NADP(+)-dependent oxidation of succinate semialdehyde to succinate. Although it has succinate semialdehyde dehydrogenase activity, is likely to act physiologically on a different aldehyde(s). This is Putative succinate-semialdehyde dehydrogenase [NADP(+)] 2 (gabD2) from Mycobacterium bovis (strain ATCC BAA-935 / AF2122/97).